The sequence spans 497 residues: Probable cytosol aminopeptidase (497 aa).

Lys-267 and Asp-272 together coordinate Mn(2+). Lys-279 is a catalytic residue. 3 residues coordinate Mn(2+): Asp-290, Asp-349, and Glu-351. Arg-353 is an active-site residue.

This sequence belongs to the peptidase M17 family. Requires Mn(2+) as cofactor.

It localises to the cytoplasm. It catalyses the reaction Release of an N-terminal amino acid, Xaa-|-Yaa-, in which Xaa is preferably Leu, but may be other amino acids including Pro although not Arg or Lys, and Yaa may be Pro. Amino acid amides and methyl esters are also readily hydrolyzed, but rates on arylamides are exceedingly low.. It carries out the reaction Release of an N-terminal amino acid, preferentially leucine, but not glutamic or aspartic acids.. Its function is as follows. Presumably involved in the processing and regular turnover of intracellular proteins. Catalyzes the removal of unsubstituted N-terminal amino acids from various peptides. The chain is Probable cytosol aminopeptidase from Pseudomonas putida (strain W619).